We begin with the raw amino-acid sequence, 531 residues long: Polygalacturonase (531 aa).

The first 23 residues, 1 to 23, serve as a signal peptide directing secretion; sequence MILSHRYTLIALAAAILSSGAHA. Residue Asp-307 is the Proton donor of the active site. His-333 is an active-site residue. Positions 518-531 are required for PGA export across the outer membrane and catalytic activity; that stretch reads AFVPLKSVAPTSPI.

It belongs to the glycosyl hydrolase 28 family. In terms of assembly, monomer.

The protein localises to the secreted. It catalyses the reaction (1,4-alpha-D-galacturonosyl)n+m + H2O = (1,4-alpha-D-galacturonosyl)n + (1,4-alpha-D-galacturonosyl)m.. In terms of biological role, contributes to the wilt disease production on tomato. This chain is Polygalacturonase (pglA), found in Ralstonia nicotianae (strain ATCC BAA-1114 / GMI1000) (Ralstonia solanacearum).